A 150-amino-acid chain; its full sequence is MRKLVAGKLHGIHVTEANLNYHGSITLDPDHCEAAGILPMEFVEIWNKNSGARISTYVILGERGSRCCILNGAAARTCQPDDPIIVCNSIYLDEAHITSLKPRIVTFDQDNHILDRLSYSVDIDTDGRYSFAILDEADEPLVIPALVSGA.

S24 functions as the Schiff-base intermediate with substrate; via pyruvic acid in the catalytic mechanism. S24 is modified (pyruvic acid (Ser)). T56 serves as a coordination point for substrate. The Proton donor role is filled by Y57. 72–74 contacts substrate; sequence GAA.

The protein belongs to the PanD family. Heterooctamer of four alpha and four beta subunits. Requires pyruvate as cofactor. In terms of processing, is synthesized initially as an inactive proenzyme, which is activated by self-cleavage at a specific serine bond to produce a beta-subunit with a hydroxyl group at its C-terminus and an alpha-subunit with a pyruvoyl group at its N-terminus.

Its subcellular location is the cytoplasm. It carries out the reaction L-aspartate + H(+) = beta-alanine + CO2. The protein operates within cofactor biosynthesis; (R)-pantothenate biosynthesis; beta-alanine from L-aspartate: step 1/1. Functionally, catalyzes the pyruvoyl-dependent decarboxylation of aspartate to produce beta-alanine. This Mesorhizobium japonicum (strain LMG 29417 / CECT 9101 / MAFF 303099) (Mesorhizobium loti (strain MAFF 303099)) protein is Aspartate 1-decarboxylase 1.